The primary structure comprises 245 residues: Rhamnosyl O-methyltransferase (245 aa).

Positions 1-38 (MGLVWRSRTSLVGQLIGLVRLVASFAAQLFYRPSDAVA) are cleaved as a signal peptide.

Belongs to the rhamnosyl O-methyltransferase family.

Catalyzes the O-methylation of the hydroxyl group located on C-2 of the first rhamnosyl residue linked to the phenolic group of glycosylated phenolphthiocerol dimycocerosates (PGL) and p-hydroxybenzoic acid derivatives (p-HBAD). This Mycobacterium bovis (strain ATCC BAA-935 / AF2122/97) protein is Rhamnosyl O-methyltransferase.